The following is a 214-amino-acid chain: Melanoregulin (214 aa).

A Cholesterol-binding sequence motif motif is present at residues 162-172 (LSERYLLVVDR). Ser-213 carries the post-translational modification Phosphoserine.

Belongs to the melanoregulin family. As to quaternary structure, identified in a complex with RILP and DCTN1; interacts directly with RILP, but does not interact directly with DCTN1. Interacts with PRPH2. Post-translationally, palmitoylated. Palmitoylation is required to maintain the protein at the melanosome membrane. As to expression, detected in melanocytes. Expressed in retina, in retinal pigment epithelium (at protein level). Widely expressed with higher expression in skin, heart, liver, testis and thymus. Detected in retina, in retinal pigment epithelium cells.

The protein localises to the apical cell membrane. It is found in the melanosome membrane. Its subcellular location is the lysosome membrane. The protein resides in the cytoplasmic vesicle membrane. In terms of biological role, probably functions as a cargo-recognition protein that couples cytoplasmic vesicles to the transport machinery. Plays a role in hair pigmentation, a process that involves shedding of melanosome-containing vesicles from melanocytes, followed by phagocytosis of the melanosome-containing vesicles by keratinocytes. Functions on melanosomes as receptor for RILP and the complex formed by RILP and DCTN1, and thereby contributes to retrograde melanosome transport from the cell periphery to the center. Overexpression causes accumulation of late endosomes and/or lysosomes at the microtubule organising center (MTOC) at the center of the cell. Probably binds cholesterol and requires the presence of cholesterol in membranes to function in microtubule-mediated retrograde organelle transport. Binds phosphatidylinositol 3-phosphate, phosphatidylinositol 4-phosphate, phosphatidylinositol 5-phosphate and phosphatidylinositol 3,5-bisphosphate, but not phosphatidylinositol 3,4-bisphosphate or phosphatidylinositol 4,5-bisphosphate. Required for normal phagosome clearing and normal activation of lysosomal enzymes in lysosomes from retinal pigment epithelium cells. Required for normal degradation of the lipofuscin component N-retinylidene-N-retinylethanolamine (A2E) in the eye. May function in membrane fusion and regulate the biogenesis of disk membranes of photoreceptor rod cells. The protein is Melanoregulin (Mreg) of Mus musculus (Mouse).